The chain runs to 250 residues: LOB domain-containing protein 37 (250 aa).

Residues 1–107 (MSCNGCRVLR…VETVLRGGSL (107 aa)) form the LOB domain. The segment at 145-227 (DSTDRNIYHH…DSGTTTTTTA (83 aa)) is disordered. Over residues 157-170 (FSSSRSRSTMDSSS) the composition is skewed to low complexity.

The protein belongs to the LOB domain-containing protein family. As to expression, expressed in young shoots, roots, stems, leaves and flowers.

This is LOB domain-containing protein 37 (LBD37) from Arabidopsis thaliana (Mouse-ear cress).